The sequence spans 789 residues: GDH/6PGL endoplasmic bifunctional protein (789 aa).

A signal peptide spans 1–16 (MLLAAMCLALLGCLQA). At Gln-17 the chain carries Pyrrolidone carboxylic acid. The segment at 17-524 (QELKGHVSII…GGQLTFSQQQ (508 aa)) is hexose-6-phosphate dehydrogenase. NADP(+) is bound by residues 29–36 (GATGDLAK) and Tyr-146. Asn-154 is a glycosylation site (N-linked (GlcNAc...) asparagine). Lys-171 lines the NADP(+) pocket. D-glucose 6-phosphate is bound by residues Lys-171, 201–205 (HYLGK), Glu-240, and Asp-259. Position 205 is an N6-succinyllysine (Lys-205). The active-site Proton acceptor is His-264. Asn-279 carries N-linked (GlcNAc...) asparagine glycosylation. Residues Lys-357 and Arg-362 each contribute to the D-glucose 6-phosphate site. Arg-367 contributes to the NADP(+) binding site. Lys-424 carries the post-translational modification N6-succinyllysine. Positions 525–538 (LEVLIPDLGSVPKP) are linker. Residues 539 to 789 (SDFQVLGARY…WYMDYEAFLG (251 aa)) are 6-phosphogluconolactonase. Trp-615 lines the NADP(+) pocket. N-linked (GlcNAc...) asparagine glycosylation occurs at Asn-681.

The protein in the N-terminal section; belongs to the glucose-6-phosphate dehydrogenase family. This sequence in the C-terminal section; belongs to the glucosamine/galactosamine-6-phosphate isomerase family. 6-phosphogluconolactonase subfamily. Homodimer. In terms of tissue distribution, expressed in liver (at protein level). Expressed in muscles. Expressed in adipose tissues.

The protein localises to the endoplasmic reticulum lumen. It carries out the reaction D-glucose 6-phosphate + NAD(+) = 6-phospho-D-glucono-1,5-lactone + NADH + H(+). The catalysed reaction is D-glucose 6-phosphate + NADP(+) = 6-phospho-D-glucono-1,5-lactone + NADPH + H(+). The enzyme catalyses 6-phospho-D-glucono-1,5-lactone + H2O = 6-phospho-D-gluconate + H(+). It catalyses the reaction 2-deoxy-D-glucose 6-phosphate + NAD(+) = 2-deoxy-6-phospho-D-glucono-1,5-lactone + NADH + H(+). It carries out the reaction 2-deoxy-D-glucose 6-phosphate + NADP(+) = 2-deoxy-6-phospho-D-glucono-1,5-lactone + NADPH + H(+). The catalysed reaction is D-galactose 6-phosphate + NADP(+) = 6-phospho-D-galactono-1,5-lactone + NADPH + H(+). The enzyme catalyses D-galactose 6-phosphate + NAD(+) = 6-phospho-D-galactono-1,5-lactone + NADH + H(+). It catalyses the reaction D-glucosamine 6-phosphate + NADP(+) = 2-amino-2-deoxy-6-phospho-D-glucono-1,5-lactone + NADPH + 2 H(+). It carries out the reaction D-glucose + NAD(+) = D-glucono-1,5-lactone + NADH + H(+). The catalysed reaction is D-glucose + NADP(+) = D-glucono-1,5-lactone + NADPH + H(+). The enzyme catalyses D-glucose 6-sulfate + NADP(+) = 6-sulfo-D-glucono-1,5-lactone + NADPH + H(+). The protein operates within carbohydrate degradation; pentose phosphate pathway; D-ribulose 5-phosphate from D-glucose 6-phosphate (oxidative stage). It functions in the pathway carbohydrate degradation; pentose phosphate pathway; D-ribulose 5-phosphate from D-glucose 6-phosphate (oxidative stage): step 2/3. Bifunctional enzyme localized in the lumen of the endoplasmic reticulum that catalyzes the first two steps of the oxidative branch of the pentose phosphate pathway/shunt, an alternative to glycolysis and a major source of reducing power and metabolic intermediates for biosynthetic processes. Has a hexose-6-phosphate dehydrogenase activity, with broad substrate specificity compared to glucose-6-phosphate 1-dehydrogenase/G6PD, and catalyzes the first step of the pentose phosphate pathway. In addition, acts as a 6-phosphogluconolactonase and catalyzes the second step of the pentose phosphate pathway. May have a dehydrogenase activity for alternative substrates including glucosamine 6-phosphate and glucose 6-sulfate. The main function of this enzyme is to provide reducing equivalents such as NADPH to maintain the adequate levels of reductive cofactors in the oxidizing environment of the endoplasmic reticulum. By producing NADPH that is needed by reductases of the lumen of the endoplasmic reticulum like corticosteroid 11-beta-dehydrogenase isozyme 1/HSD11B1, indirectly regulates their activity. In Mus musculus (Mouse), this protein is GDH/6PGL endoplasmic bifunctional protein.